We begin with the raw amino-acid sequence, 69 residues long: MYQIPDMLYNEKMPPRAKKLFVETFTKYHKMNGGDEDIAMHKARKALEEKYVKIDTLQNLGFRAKPPTR.

This is an uncharacterized protein from Lepidoptera (butterflies and moths).